The sequence spans 346 residues: tRNA N6-adenosine threonylcarbamoyltransferase (346 aa).

Fe cation-binding residues include His111 and His115. Substrate is bound by residues Leu134–Gly138, Asp167, Gly180, and Asn279. Asp307 contacts Fe cation.

This sequence belongs to the KAE1 / TsaD family. It depends on Fe(2+) as a cofactor.

Its subcellular location is the cytoplasm. The catalysed reaction is L-threonylcarbamoyladenylate + adenosine(37) in tRNA = N(6)-L-threonylcarbamoyladenosine(37) in tRNA + AMP + H(+). Functionally, required for the formation of a threonylcarbamoyl group on adenosine at position 37 (t(6)A37) in tRNAs that read codons beginning with adenine. Is involved in the transfer of the threonylcarbamoyl moiety of threonylcarbamoyl-AMP (TC-AMP) to the N6 group of A37, together with TsaE and TsaB. TsaD likely plays a direct catalytic role in this reaction. The polypeptide is tRNA N6-adenosine threonylcarbamoyltransferase (Burkholderia multivorans (strain ATCC 17616 / 249)).